We begin with the raw amino-acid sequence, 357 residues long: Dihydroorotate dehydrogenase (quinone) (357 aa).

FMN is bound by residues 66-70 (AGFDK) and threonine 90. Position 70 (lysine 70) interacts with substrate. 115 to 119 (NRMGF) contributes to the substrate binding site. Positions 143 and 176 each coordinate FMN. Residue asparagine 176 coordinates substrate. The Nucleophile role is filled by serine 179. Asparagine 181 contacts substrate. FMN is bound by residues lysine 212 and threonine 240. Residue 241–242 (NT) participates in substrate binding. Residues glycine 264, glycine 293, and 314 to 315 (YT) contribute to the FMN site.

This sequence belongs to the dihydroorotate dehydrogenase family. Type 2 subfamily. Monomer. FMN serves as cofactor.

It localises to the cell membrane. It catalyses the reaction (S)-dihydroorotate + a quinone = orotate + a quinol. Its pathway is pyrimidine metabolism; UMP biosynthesis via de novo pathway; orotate from (S)-dihydroorotate (quinone route): step 1/1. Functionally, catalyzes the conversion of dihydroorotate to orotate with quinone as electron acceptor. The sequence is that of Dihydroorotate dehydrogenase (quinone) from Mycobacterium bovis (strain BCG / Pasteur 1173P2).